We begin with the raw amino-acid sequence, 341 residues long: Two-component response regulator EHD1 (341 aa).

The region spanning 12–127 (RVLVIDDDCS…ELSNIWQHIF (116 aa)) is the Response regulatory domain. 4-aspartylphosphate is present on aspartate 63. One can recognise an HTH myb-type domain in the interval 195–254 (DLGKSRLTWTTQLHRQFIAAVNHLGEDKAVPKKILGIMKVKHLTREQVASHLQKYRMQLK). Residues 225 to 250 (PKKILGIMKVKHLTREQVASHLQKYR) constitute a DNA-binding region (H-T-H motif).

Post-translationally, two-component system major event consists of a His-to-Asp phosphorelay between a sensor histidine kinase (HK) and a response regulator (RR). In plants, the His-to-Asp phosphorelay involves an additional intermediate named Histidine-containing phosphotransfer protein (HPt). This multistep phosphorelay consists of a His-Asp-His-Asp sequential transfer of a phosphate group between first a His and an Asp of the HK protein, followed by the transfer to a conserved His of the HPt protein and finally the transfer to an Asp in the receiver domain of the RR protein.

It is found in the nucleus. Transcriptional activator that acts as a floral inducer to promote short-day (SD) flowering pathway. Activates Hd3a and other FT-like genes independently from Hd1. May also activate MADS-box transcription factors involved in flowering regulation. This is Two-component response regulator EHD1 (EHD1) from Oryza sativa subsp. indica (Rice).